Here is a 442-residue protein sequence, read N- to C-terminus: Adenylosuccinate synthetase (442 aa).

Residues 16–22 (GDEGKGK) and 44–46 (GHT) each bind GTP. The Proton acceptor role is filled by aspartate 17. Mg(2+) contacts are provided by aspartate 17 and glycine 44. Residues 17–20 (DEGK), 42–45 (NAGH), threonine 133, arginine 147, glutamine 228, threonine 243, and arginine 307 contribute to the IMP site. The Proton donor role is filled by histidine 45. 303–309 (AVTGRPR) serves as a coordination point for substrate. Residues arginine 309, 335–337 (KLD), and 417–419 (STG) contribute to the GTP site.

The protein belongs to the adenylosuccinate synthetase family. As to quaternary structure, homodimer. It depends on Mg(2+) as a cofactor.

Its subcellular location is the cytoplasm. It catalyses the reaction IMP + L-aspartate + GTP = N(6)-(1,2-dicarboxyethyl)-AMP + GDP + phosphate + 2 H(+). It participates in purine metabolism; AMP biosynthesis via de novo pathway; AMP from IMP: step 1/2. Its function is as follows. Plays an important role in the de novo pathway of purine nucleotide biosynthesis. Catalyzes the first committed step in the biosynthesis of AMP from IMP. This Koribacter versatilis (strain Ellin345) protein is Adenylosuccinate synthetase.